A 200-amino-acid chain; its full sequence is Cation channel sperm-associated auxiliary subunit zeta (200 aa).

Positions 1 to 29 (MEEKPSKVSLKSSDRQGSDEESVHSDTRD) are enriched in basic and acidic residues. Disordered stretches follow at residues 1–31 (MEEKPSKVSLKSSDRQGSDEESVHSDTRDLW) and 58–78 (NISKTRGWHSPGRGSLDEGYK).

In terms of assembly, component of the CatSper complex or CatSpermasome composed of the core pore-forming members CATSPER1, CATSPER2, CATSPER3 and CATSPER4 as well as auxiliary members CATSPERB, CATSPERG, CATSPERD, CATSPERE, CATSPERZ, C2CD6/CATSPERT, TMEM249, TMEM262 and EFCAB9. HSPA1 may be an additional auxiliary complex member. The core complex members CATSPER1, CATSPER2, CATSPER3 and CATSPER4 form a heterotetrameric channel. The auxiliary CATSPERB, CATSPERG, CATSPERD and CATSPERE subunits form a pavilion-like structure over the pore which stabilizes the complex through interactions with CATSPER4, CATSPER3, CATSPER1 and CATSPER2 respectively. TMEM262/CATSPERH interacts with CATSPERB, further stabilizing the complex. C2CD6/CATSPERT interacts at least with CATSPERD and is required for targeting the CatSper complex in the flagellar membrane. Interacts with EFCAB9; the interaction is direct, Ca(2+)-dependent and connects EFCAB9 with the CatSper complex. Dissociates from EFCAB9 at elevated pH.

The protein localises to the cell projection. It is found in the cilium. Its subcellular location is the flagellum membrane. Its function is as follows. Auxiliary component of the CatSper complex, a complex involved in sperm cell hyperactivation. Sperm cell hyperactivation is needed for sperm motility which is essential late in the preparation of sperm for fertilization. Required for a distribution of the CatSper complex in linear quadrilateral nanodomains along the flagellum, maximizing fertilization inside the mammalian female reproductive tract. Together with EFCAB9, associates with the CatSper channel pore and is required for the two-row structure of each single CatSper channel. This chain is Cation channel sperm-associated auxiliary subunit zeta, found in Homo sapiens (Human).